Reading from the N-terminus, the 496-residue chain is NADP-dependent glyceraldehyde-3-phosphate dehydrogenase (496 aa).

Substrate-binding positions include R116 and 169–170; that span reads NY. The NADP(+) site is built by K192, T195, and D230. 245–249 is an NAD(+) binding site; it reads GGDTG. Residue E264 is the Proton acceptor of the active site. 297 to 299 serves as a coordination point for substrate; that stretch reads RCT. Residue C298 is the Nucleophile of the active site. NADP(+) is bound at residue E391. Residue R451 coordinates substrate.

This sequence belongs to the aldehyde dehydrogenase family.

It localises to the cytoplasm. The catalysed reaction is D-glyceraldehyde 3-phosphate + NADP(+) + H2O = (2R)-3-phosphoglycerate + NADPH + 2 H(+). Its function is as follows. Important as a means of generating NADPH for biosynthetic reactions. In Pisum sativum (Garden pea), this protein is NADP-dependent glyceraldehyde-3-phosphate dehydrogenase (GAPN).